The chain runs to 321 residues: Olfactory receptor 56B34 (321 aa).

Over 1 to 36 (MGTALHETNSSEVHVSEFILLGFPGIHEFQIWLSLP) the chain is Extracellular. A helical membrane pass occupies residues 37-57 (MALLYIVALGANLLILITIYL). Over 58–70 (EPTLHQPMYQFLG) the chain is Cytoplasmic. A helical membrane pass occupies residues 71–91 (ILAAVDIGLATTSMPKILAIL). At 92–105 (WFDAKTISLPECFA) the chain is on the extracellular side. A disulfide bridge links cysteine 103 with cysteine 185. A helical transmembrane segment spans residues 106–126 (QIYAIHTFMCMESGVFLCMAI). Over 127–128 (DR) the chain is Cytoplasmic. The chain crosses the membrane as a helical span at residues 129–149 (YVAICYPLQYPSIVTEAFVIK). Topologically, residues 150–207 (ATLSMLLRNGLLTIPVPVLAAQRQYCSRNEIDHCLCSNLGVISLACDDITVNRFYQLA) are extracellular. Residues 208–228 (LAWLVVGSDMILVYASYALII) form a helical membrane-spanning segment. Topologically, residues 229–250 (RSVLRLNSTEAASKALSTCSSH) are cytoplasmic. Residues 251 to 271 (LILIMFYYTAIVIVSVTHLAG) form a helical membrane-spanning segment. The Extracellular portion of the chain corresponds to 272 to 275 (RRVP). Residues 276–296 (LIPVLLNVMHIVIPPSLNPVV) traverse the membrane as a helical segment. The Cytoplasmic segment spans residues 297–321 (YALRTQELKVGFRKVFSLSEFVSRK).

The protein belongs to the G-protein coupled receptor 1 family.

It is found in the cell membrane. Functionally, odorant receptor. The polypeptide is Olfactory receptor 56B34 (Mus musculus (Mouse)).